The following is a 248-amino-acid chain: Probable transcriptional regulatory protein MYPE8020 (248 aa).

Belongs to the TACO1 family.

It localises to the cytoplasm. The chain is Probable transcriptional regulatory protein MYPE8020 from Malacoplasma penetrans (strain HF-2) (Mycoplasma penetrans).